The sequence spans 518 residues: Chromosomal replication initiator protein DnaA (518 aa).

The segment at 1-72 is domain I, interacts with DnaA modulators; that stretch reads MNEFWQHCSA…DLARDFWHSP (72 aa). Residues 72–181 are domain II; that stretch reads PVDVQFVLDP…GESDSTYERS (110 aa). Residues 155-178 form a disordered region; that stretch reads AAARRTWRPGAAAQAAGGESDSTY. Residues 182 to 398 are domain III, AAA+ region; that stretch reads KLNPVLTFDN…GALRKILAYS (217 aa). ATP is bound by residues glycine 226, glycine 228, lysine 229, and threonine 230. The domain IV, binds dsDNA stretch occupies residues 399-518; the sequence is KFHGREITIE…LHVLEQTLKG (120 aa).

Belongs to the DnaA family. As to quaternary structure, oligomerizes as a right-handed, spiral filament on DNA at oriC.

The protein resides in the cytoplasm. Its function is as follows. Plays an essential role in the initiation and regulation of chromosomal replication. ATP-DnaA binds to the origin of replication (oriC) to initiate formation of the DNA replication initiation complex once per cell cycle. Binds the DnaA box (a 9 base pair repeat at the origin) and separates the double-stranded (ds)DNA. Forms a right-handed helical filament on oriC DNA; dsDNA binds to the exterior of the filament while single-stranded (ss)DNA is stabiized in the filament's interior. The ATP-DnaA-oriC complex binds and stabilizes one strand of the AT-rich DNA unwinding element (DUE), permitting loading of DNA polymerase. After initiation quickly degrades to an ADP-DnaA complex that is not apt for DNA replication. Binds acidic phospholipids. The polypeptide is Chromosomal replication initiator protein DnaA (Paraburkholderia phymatum (strain DSM 17167 / CIP 108236 / LMG 21445 / STM815) (Burkholderia phymatum)).